The chain runs to 404 residues: Serine/threonine-protein phosphatase 2A regulatory subunit rsa-1 (404 aa).

Part of a complex consisting of a common heterodimeric core enzyme, composed of catalytic subunit let-92 and constant regulatory subunit paa-1, that associates with a variety of regulatory subunits which confer distinct properties to the holoenzyme. Interacts with rsa-2, spd-5 and tpxl-1.

Its subcellular location is the cytoplasm. The protein resides in the cytoskeleton. The protein localises to the microtubule organizing center. It is found in the centrosome. Its function is as follows. Regulatory subunit of phosphatase let-92 which recruits let-92/paa-1 complex to the centrosomes, thereby regulating microtubule outgrowth from centrosomes and mitotic spindle assembly ensuring the stability of kinetochore microtubules. The chain is Serine/threonine-protein phosphatase 2A regulatory subunit rsa-1 from Caenorhabditis elegans.